The primary structure comprises 570 residues: MMQKLIAQIEKGKPFFEKLSRNIYLRAIRDGFISAMPVILFSSIFLLIAYVPNIFGFKWDKGMEAILMKPYNYTMGLVAFLVAGTTAKSLTDSFNRKLESTNQINFISTMQAAMCGFLFLASDPAKDGGFLSAFMGTKGLLTAFLSAFVTVIVYNFCVKRNITIKMPKEVPPNISQVFKDLIPFSAVIIILYALDLVIRNSFKSNVAEGILKLFEPLFTAADGWIGVTIIFGAFALFWFVGIHGPSIVEPAIAAITYANIEANFKLLQAGEHADKIITSGTQMFIVTFGGTGATLVVPFMFMWMTKSKRNKAIGRASVVPTFFGVNEPILFGAPLVLNPVFFIPFVLAPIVNVWIFKLFVEVLGMNSFSVNLPWTTPGPLGIIMGTGFGLWSFVLAITLIVVDIIIYYPFLKVYDSEILDEEEGRKESNSDLKEKVAANFDTKKADSILAASGVSDDAAKASNITEQTNVLVLCAGGGTSGLLANALNKAAEEYHVPVKAAAGGYGAHMDIMKEYQLIILAPQVASNYEDIKQDTDRLGIKLAKTQGAEYIKLTRDGQAALDFVQQQFEN.

A PTS EIIC type-3 domain is found at 9–410 (IEKGKPFFEK…VVDIIIYYPF (402 aa)). The next 9 membrane-spanning stretches (helical) occupy residues 31-51 (GFIS…IAYV), 65-85 (AILM…VAGT), 104-124 (INFI…ASDP), 133-153 (AFMG…TVIV), 178-198 (FKDL…DLVI), 223-243 (GWIG…VGIH), 283-303 (MFIV…MFMW), 340-360 (VFFI…KLFV), and 382-402 (IIMG…LIVV). The region spanning 467–570 (QTNVLVLCAG…LDFVQQQFEN (104 aa)) is the PTS EIIB type-3 domain. C474 (phosphocysteine intermediate; for EIIB activity) is an active-site residue. The residue at position 474 (C474) is a Phosphocysteine; by EIIA.

It is found in the cell membrane. The enzyme catalyses lactose(out) + N(pros)-phospho-L-histidyl-[protein] = lactose 6-phosphate(in) + L-histidyl-[protein]. Its function is as follows. The phosphoenolpyruvate-dependent sugar phosphotransferase system (sugar PTS), a major carbohydrate active transport system, catalyzes the phosphorylation of incoming sugar substrates concomitantly with their translocation across the cell membrane. The enzyme II LacEF PTS system is involved in lactose transport, but can also use galactose, isopropyl beta-thio-galactopyranoside and thiomethyl beta-D-galactopyranoside (TMG) as substrates. This Staphylococcus aureus protein is PTS system lactose-specific EIICB component.